We begin with the raw amino-acid sequence, 29 residues long: Kappa-theraphotoxin-Ps1a (29 aa).

Cystine bridges form between Cys-2/Cys-16, Cys-9/Cys-21, and Cys-15/Cys-25. Ile-29 is subject to Isoleucine amide.

It belongs to the neurotoxin 30 (phrixotoxin) family. In terms of tissue distribution, expressed by the venom gland.

The protein resides in the secreted. Functionally, potent and specific blocker of Kv4.2/KCND2 (IC(50)=5 nM) and Kv4.3/KCND3 (IC(50)=28 nM) potassium channels. Acts by altering the gating properties of these channels. Also shows moderate inhibition on human voltage-gated sodium channel Nav1.7/SCN9A activation (IC(50)=423 nM). This is Kappa-theraphotoxin-Ps1a from Paraphysa scrofa (Chilean copper tarantula).